The following is a 288-amino-acid chain: Small ribosomal subunit protein uS9m (288 aa).

A disordered region spans residues 269–288 (VERKKPGKKKARKMPTWVKR).

Belongs to the universal ribosomal protein uS9 family.

The protein localises to the mitochondrion. This Candida glabrata (strain ATCC 2001 / BCRC 20586 / JCM 3761 / NBRC 0622 / NRRL Y-65 / CBS 138) (Yeast) protein is Small ribosomal subunit protein uS9m (MRPS9).